The following is a 241-amino-acid chain: Diacetyl reductase [(S)-acetoin forming] (241 aa).

6–30 (LVTGAGQGIGKAIALRLVKDGFAVA) provides a ligand contact to NAD(+). Serine 139 contributes to the substrate binding site. Tyrosine 152 acts as the Proton acceptor in catalysis. Lysine 156 is an active-site residue.

This sequence belongs to the short-chain dehydrogenases/reductases (SDR) family. Homotetramer.

The catalysed reaction is (S)-acetoin + NAD(+) = diacetyl + NADH + H(+). In terms of biological role, catalyzes the irreversible reduction of 2,3-butanediol to (S)-acetoin in the presence of NADH. The polypeptide is Diacetyl reductase [(S)-acetoin forming] (budC) (Raoultella terrigena (Klebsiella terrigena)).